A 185-amino-acid polypeptide reads, in one-letter code: Putative manganese efflux pump MntP (185 aa).

6 helical membrane-spanning segments follow: residues 4–24, 43–63, 67–87, 107–127, 131–151, and 165–185; these read LLLSSLVIAVGLAMDSFSVSL, IFFGFFQFAMPLLGWGIGVPI, IDPFGYWIVVGLFFFIGGKMI, LLLAVATSIDALAVGISFALI, VLLPAVIIGVVAFLFSFFGVL, and QILGGVILVLIGIKFLIEYCL.

Belongs to the MntP (TC 9.B.29) family.

Its subcellular location is the cell membrane. Functionally, probably functions as a manganese efflux pump. In Methanocorpusculum labreanum (strain ATCC 43576 / DSM 4855 / Z), this protein is Putative manganese efflux pump MntP.